The primary structure comprises 4022 residues: Intermembrane lipid transfer protein VPS13B (4022 aa).

The Chorein N-terminal domain occupies 2–102; the sequence is LESYVTPILM…KDGIQDDHES (101 aa). A disordered region spans residues 100 to 134; the sequence is HESCGSNSTNRSTAESTKSSIKPRRMQQAAPTDPD. Residues 103 to 119 are compositionally biased toward polar residues; sequence CGSNSTNRSTAESTKSS. Phosphoserine is present on residues Ser-414, Ser-999, Ser-1002, and Ser-1033. Residues 1247–1314 are disordered; the sequence is NLSPTSPETM…SVTLEQTTSN (68 aa). Polar residues-rich tracts occupy residues 1264–1292 and 1302–1314; these read PVRS…TEGD and FSDS…TTSN. A Phosphoserine modification is found at Ser-1815. Basic and acidic residues predominate over residues 1860–1872; sequence KSQEQKNNEKTDK. Residues 1860-1880 form a disordered region; the sequence is KSQEQKNNEKTDKSSLNLPEV. Positions 2631 to 2716 constitute an SHR-BD domain; it reads HFVICNDTQE…RTASLIIKVQ (86 aa). The tract at residues 3908-4022 is localizes the protein to the Golgi apparatus; sequence AFPVTEIDCA…KNKALRKGFP (115 aa).

The protein belongs to the VPS13 family. Interacts with STX6. Interacts with STX12. Interacts with RAB6A isoform 1 (GTP-bound) and isoform 2 (GTP-bound). Interacts with RAB6B (GTP-bound). As to expression, widely expressed. There is apparent differential expression of different transcripts. In fetal brain, lung, liver, and kidney, two transcripts of 2 and 5 kb are identified. These transcripts are also seen in all adult tissues analyzed. A larger transcript (12-14 kb) is expressed in prostate, testis, ovary, and colon in the adult. Expression is very low in adult brain tissue. Expressed in peripheral blood lymphocytes. Isoform 1 and isoform 2 are expressed in brain and retina. Isoform 2 is expressed ubiquitously.

It localises to the recycling endosome membrane. It is found in the cytoplasmic vesicle. Its subcellular location is the secretory vesicle. The protein localises to the acrosome membrane. The protein resides in the golgi apparatus. It localises to the cis-Golgi network membrane. It is found in the endoplasmic reticulum-Golgi intermediate compartment membrane. Its subcellular location is the trans-Golgi network membrane. The protein localises to the early endosome membrane. The protein resides in the lysosome membrane. Functionally, mediates the transfer of lipids between membranes at organelle contact sites. Binds phosphatidylinositol 3-phosphate. Functions as a tethering factor in the slow endocytic recycling pathway, to assist traffic between early and recycling endosomes. Involved in the transport of proacrosomal vesicles to the nuclear dense lamina (NDL) during spermatid development. Plays a role in the assembly of the Golgi apparatus, possibly by mediating trafficking to the Golgi membrane. Plays a role in the development of the nervous system, and may be required for neuron projection development. May also play a role during adipose tissue development. Required for maintenance of the ocular lens. The protein is Intermembrane lipid transfer protein VPS13B (VPS13B) of Homo sapiens (Human).